Reading from the N-terminus, the 550-residue chain is CTP synthase (550 aa).

The amidoligase domain stretch occupies residues 1–270 (MTKYVFVTGG…DNIVCEALGL (270 aa)). S13 lines the CTP pocket. S13 is a binding site for UTP. ATP-binding positions include 14 to 19 (SLGKGI) and D71. 2 residues coordinate Mg(2+): D71 and E144. CTP is bound by residues 151 to 153 (DIE), 191 to 196 (KTKPTQ), and K227. Residues 191-196 (KTKPTQ) and K227 contribute to the UTP site. Residues 295–545 (TIGMVGKYVD…IRAALEHKAQ (251 aa)) enclose the Glutamine amidotransferase type-1 domain. G356 is an L-glutamine binding site. C383 functions as the Nucleophile; for glutamine hydrolysis in the catalytic mechanism. L-glutamine contacts are provided by residues 384–387 (LGMQ) and E407. Positions 430–459 (VERRDNSSDLGGTMRKGAQRCPIRPGTRAQ) are disordered. R473 provides a ligand contact to L-glutamine. Residues H518 and E520 contribute to the active site.

Belongs to the CTP synthase family. Homotetramer.

It catalyses the reaction UTP + L-glutamine + ATP + H2O = CTP + L-glutamate + ADP + phosphate + 2 H(+). The catalysed reaction is L-glutamine + H2O = L-glutamate + NH4(+). It carries out the reaction UTP + NH4(+) + ATP = CTP + ADP + phosphate + 2 H(+). It functions in the pathway pyrimidine metabolism; CTP biosynthesis via de novo pathway; CTP from UDP: step 2/2. Allosterically activated by GTP, when glutamine is the substrate; GTP has no effect on the reaction when ammonia is the substrate. The allosteric effector GTP functions by stabilizing the protein conformation that binds the tetrahedral intermediate(s) formed during glutamine hydrolysis. Inhibited by the product CTP, via allosteric rather than competitive inhibition. In terms of biological role, catalyzes the ATP-dependent amination of UTP to CTP with either L-glutamine or ammonia as the source of nitrogen. Regulates intracellular CTP levels through interactions with the four ribonucleotide triphosphates. This is CTP synthase from Bordetella parapertussis (strain 12822 / ATCC BAA-587 / NCTC 13253).